The chain runs to 273 residues: MSYLLDPSRKTITIPKLQAMRDAGEKIAMLTAYDSSFAALLDYCGVEMILVGDSLGNVMQGQQTTLPVTLEQMAYHTECAARGNQTSLLLTDLPFGTYPTPEAAFASAVTLMKAGAQMVKLEGGDWLAPIVKFLVERSIPVCAHIGLTPQSVHALGGFKVQGKTNAGAAQLKRDALALQAAGAQVVLMEAVPAALAGEITQSLTVPTIGIGAGADCSGQVLVLQDMLNVYPGRKAKFVRNFMDGQTSIEAAVRAYVAAVKDGSFPAAEHTFSA.

Mg(2+)-binding residues include aspartate 53 and aspartate 92. Residues 53–54, aspartate 92, and lysine 120 contribute to the 3-methyl-2-oxobutanoate site; that span reads DS. Residue glutamate 122 participates in Mg(2+) binding. Glutamate 189 serves as the catalytic Proton acceptor.

Belongs to the PanB family. As to quaternary structure, homodecamer; pentamer of dimers. Mg(2+) is required as a cofactor.

The protein resides in the cytoplasm. It carries out the reaction 3-methyl-2-oxobutanoate + (6R)-5,10-methylene-5,6,7,8-tetrahydrofolate + H2O = 2-dehydropantoate + (6S)-5,6,7,8-tetrahydrofolate. It functions in the pathway cofactor biosynthesis; (R)-pantothenate biosynthesis; (R)-pantoate from 3-methyl-2-oxobutanoate: step 1/2. Functionally, catalyzes the reversible reaction in which hydroxymethyl group from 5,10-methylenetetrahydrofolate is transferred onto alpha-ketoisovalerate to form ketopantoate. The chain is 3-methyl-2-oxobutanoate hydroxymethyltransferase from Cupriavidus necator (strain ATCC 17699 / DSM 428 / KCTC 22496 / NCIMB 10442 / H16 / Stanier 337) (Ralstonia eutropha).